We begin with the raw amino-acid sequence, 465 residues long: Coumaroyl-CoA:anthocyanidin 3-O-glucoside-6''-O-coumaroyltransferase 2 (465 aa).

The residue at position 1 (M1) is an N-acetylmethionine. Residues H173 and D406 each act as proton acceptor in the active site.

Belongs to the plant acyltransferase family. Highly expressed in flowers, and leaves. Lower levels of expression in stems, roots and siliques.

Its function is as follows. Involved in the acylation of the 6'' position of the 3-O-glucose residue of anthocyanin. Also able to use flavonol 3-glucosides as the acyl acceptor. In Arabidopsis thaliana (Mouse-ear cress), this protein is Coumaroyl-CoA:anthocyanidin 3-O-glucoside-6''-O-coumaroyltransferase 2 (3AT2).